The following is a 129-amino-acid chain: Small ribosomal subunit protein uS12 (129 aa).

Asp89 carries the post-translational modification 3-methylthioaspartic acid.

The protein belongs to the universal ribosomal protein uS12 family. In terms of assembly, part of the 30S ribosomal subunit. Contacts proteins S8 and S17. May interact with IF1 in the 30S initiation complex.

With S4 and S5 plays an important role in translational accuracy. In terms of biological role, interacts with and stabilizes bases of the 16S rRNA that are involved in tRNA selection in the A site and with the mRNA backbone. Located at the interface of the 30S and 50S subunits, it traverses the body of the 30S subunit contacting proteins on the other side and probably holding the rRNA structure together. The combined cluster of proteins S8, S12 and S17 appears to hold together the shoulder and platform of the 30S subunit. The chain is Small ribosomal subunit protein uS12 from Helicobacter hepaticus (strain ATCC 51449 / 3B1).